The chain runs to 259 residues: Small ribosomal subunit protein uS2 (259 aa).

It belongs to the universal ribosomal protein uS2 family.

The protein is Small ribosomal subunit protein uS2 of Streptococcus pneumoniae (strain 70585).